We begin with the raw amino-acid sequence, 207 residues long: MAKTYDYLFKLLLIGDSGVGKTCVLFRFSEDAFNSTFISTIGIDFKIRTIELDGKRIKLQIWDTAGQERFRTITTAYYRGAMGIMLVYDITNEKSFDNIRNWIRNIEEHASADVEKMILGNKCDVNDKRQVSKERGEKLALDYGIKFMETSAKANINVENAFYTLARDIKAKMDKKLEGNSPQGSNQGVKITPDQQKRSSFFRCVLL.

Residues S17, G18, V19, G20, K21, T22, C23, S35, S39, and T40 each contribute to the GTP site. Mg(2+) is bound at residue T22. 2 short sequence motifs (switch) span residues 31–45 and 63–80; these read DAFNSTFISTIGIDF and DTAGQERFRTITTAYYRG. The Mg(2+) site is built by T40 and D63. G66 serves as a coordination point for GTP. T72 is modified (phosphothreonine). Positions 121, 122, 124, 152, and 153 each coordinate GTP. S181 and S185 each carry phosphoserine. Cysteine methyl ester is present on C204. C204 carries S-geranylgeranyl cysteine lipidation. A propeptide spans 205–207 (removed in mature form); sequence VLL.

It belongs to the small GTPase superfamily. Rab family. Interacts (GTP-bound form) with MICALL1; regulates RAB8A association with recycling endosomes. Interacts with MICALL2; competes with RAB13 and is involved in E-cadherin endocytic recycling. Interacts (GTP-bound form) with MICAL1, MICALCL, MICAL3, EHBP1 and EHBP1L1; at least in case of MICAL1, MICALCL, MICAL3 and EHBP1L1 two molecules of RAB8A can bind to one molecule of the effector protein; ternary complexes of RAB8A, RAB13 and either MICAL1 or EHBP1L1 are possible. Interacts with EHD1. Interacts with MAP4K2 and SYTL4. Interacts with SGSM1 and SGSM3. Interacts with RABIF, RIMS2, RPH3A and RPH3A. Interacts with OPTN. Interacts with RAB3IP, RAB3IP functions as guanine exchange factor (GEF). Interacts with MYO5B. Interacts with CIMAP3. Interacts with BIRC6/bruce. Interacts with OCRL. Interacts with AHI1. Interacts with DCDC1. Interacts with LRRK2; interaction facilitates phosphorylation of Thr-72. Interacts with RAB31P, GDI1, GDI2, CHM, CHML, RABGGTA, RABGGTB, TBC1D15 and INPP5B; these interactions are dependent on Thr-72 not being phosphorylated. Interacts with RILPL1 and RILPL2; these interactions are dependent on the phosphorylation of Thr-72 by LRRK2. Interacts with DZIP1; prevents inhibition by the GDP-dissociation inhibitor GDI2. Interacts (in GDP-bound form) with RAB3IP/Rabin8, RAB3IP functions as guanine exchange factor (GEF) towards RAB8A. Interacts (in GDP-bound form) with RPGR, RPGR functions as GEF towards RAB8A. Requires Mg(2+) as cofactor. Post-translationally, phosphorylation of Thr-72 in the switch II region by LRRK2 prevents the association of RAB regulatory proteins, including CHM, CHML and RAB GDP dissociation inhibitors GDI1 and GDI2. Phosphorylation by LRRK2 is required for localization to stressed lysosomes.

The protein localises to the cell membrane. It is found in the golgi apparatus. The protein resides in the endosome membrane. Its subcellular location is the recycling endosome membrane. It localises to the cell projection. The protein localises to the cilium. It is found in the cytoplasmic vesicle. The protein resides in the phagosome membrane. Its subcellular location is the cytoplasm. It localises to the cytoskeleton. The protein localises to the microtubule organizing center. It is found in the centrosome. The protein resides in the centriole. Its subcellular location is the cilium basal body. It localises to the midbody. The protein localises to the lysosome. It carries out the reaction GTP + H2O = GDP + phosphate + H(+). Its activity is regulated as follows. Regulated by guanine nucleotide exchange factors (GEFs) such as RAB3IP/Rabin8 and RPGR which promote the exchange of bound GDP for free GTP, GTPase activating proteins (GAPs) which increase the GTP hydrolysis activity, and GDP dissociation inhibitors (GDIs) which inhibit the dissociation of the nucleotide from the GTPase. Activated in response to insulin. The small GTPases Rab are key regulators of intracellular membrane trafficking, from the formation of transport vesicles to their fusion with membranes. Rabs cycle between an inactive GDP-bound form and an active GTP-bound form that is able to recruit to membranes different sets of downstream effectors directly responsible for vesicle formation, movement, tethering and fusion. RAB8A is involved in polarized vesicular trafficking and neurotransmitter release. Together with RAB11A, RAB3IP, the exocyst complex, PARD3, PRKCI, ANXA2, CDC42 and DNMBP promotes transcytosis of PODXL to the apical membrane initiation sites (AMIS), apical surface formation and lumenogenesis. Regulates the compacted morphology of the Golgi. Together with MYO5B and RAB11A participates in epithelial cell polarization. Also involved in membrane trafficking to the cilium and ciliogenesis. Together with MICALL2, may also regulate adherens junction assembly. May play a role in insulin-induced transport to the plasma membrane of the glucose transporter GLUT4 and therefore play a role in glucose homeostasis. Involved in autophagy. Participates in the export of a subset of neosynthesized proteins through a Rab8-Rab10-Rab11-dependent endososomal export route. Targeted to and stabilized on stressed lysosomes through LRRK2 phosphorylation. Suppresses stress-induced lysosomal enlargement through EHBP1 and EHNP1L1 effector proteins. The chain is Ras-related protein Rab-8A (RAB8A) from Bos taurus (Bovine).